The chain runs to 350 residues: 26S proteasome non-ATPase regulatory subunit 8 (350 aa).

The interval 1 to 24 is disordered; the sequence is MFIKGRAPRAPPRERRRATRGGLR. Phosphoserine is present on S106. One can recognise a PCI domain in the interval 162–331; it reads PSFERYMAQL…QQKPEDTTIP (170 aa). Residue K297 forms a Glycyl lysine isopeptide (Lys-Gly) (interchain with G-Cter in SUMO2) linkage.

Belongs to the proteasome subunit S14 family. In terms of assembly, component of the 19S proteasome regulatory particle complex. The 26S proteasome consists of a 20S core particle (CP) and two 19S regulatory subunits (RP). The regulatory particle is made of a lid composed of 9 subunits including PSMD8, a base containing 6 ATPases and few additional components. Interacts with DDI2. Interacts with TASOR.

Functionally, component of the 26S proteasome, a multiprotein complex involved in the ATP-dependent degradation of ubiquitinated proteins. This complex plays a key role in the maintenance of protein homeostasis by removing misfolded or damaged proteins, which could impair cellular functions, and by removing proteins whose functions are no longer required. Therefore, the proteasome participates in numerous cellular processes, including cell cycle progression, apoptosis, or DNA damage repair. In Homo sapiens (Human), this protein is 26S proteasome non-ATPase regulatory subunit 8 (PSMD8).